The following is a 141-amino-acid chain: Lutropin subunit beta (141 aa).

Residues 1–20 (MERLQGLLLWLLLSPSVVWA) form the signal peptide. Intrachain disulfides connect cysteine 29–cysteine 77, cysteine 43–cysteine 92, cysteine 46–cysteine 130, cysteine 54–cysteine 108, cysteine 58–cysteine 110, and cysteine 113–cysteine 120. Residue asparagine 33 is glycosylated (N-linked (GlcNAc...) asparagine).

The protein belongs to the glycoprotein hormones subunit beta family. Heterodimer of a common alpha chain and a unique beta chain which confers biological specificity to thyrotropin, lutropin, follitropin and gonadotropin.

It localises to the secreted. Promotes spermatogenesis and ovulation by stimulating the testes and ovaries to synthesize steroids. In Rattus norvegicus (Rat), this protein is Lutropin subunit beta (Lhb).